Here is a 68-residue protein sequence, read N- to C-terminus: Large ribosomal subunit protein bL31 (68 aa).

The Zn(2+) site is built by Cys-17, Cys-19, Cys-37, and Cys-40.

Belongs to the bacterial ribosomal protein bL31 family. Type A subfamily. As to quaternary structure, part of the 50S ribosomal subunit. Zn(2+) serves as cofactor.

Functionally, binds the 23S rRNA. The polypeptide is Large ribosomal subunit protein bL31 (Dehalococcoides mccartyi (strain ATCC BAA-2266 / KCTC 15142 / 195) (Dehalococcoides ethenogenes (strain 195))).